The chain runs to 582 residues: uncharacterized protein (582 aa).

Positions Met1 to Ala27 are cleaved as a signal peptide. Residues Gly241–Asn257 show a composition bias toward gly residues. The tract at residues Gly241 to Thr278 is disordered. Residues Leu258 to Thr278 show a composition bias toward low complexity.

It belongs to the mycobacterial PPE family.

This is an uncharacterized protein from Mycobacterium tuberculosis (strain ATCC 25618 / H37Rv).